The primary structure comprises 356 residues: N-acyl-phosphatidylethanolamine-hydrolyzing phospholipase D 1 (356 aa).

The Zn(2+) site is built by H144 and H146. Y147 serves as a coordination point for an N-acyl-1,2-diacyl-sn-glycero-3-phosphoethanolamine. Zn(2+)-binding residues include D148, H149, H217, and D248. Residue H286 coordinates an N-acyl-1,2-diacyl-sn-glycero-3-phosphoethanolamine. H308 provides a ligand contact to Zn(2+).

This sequence belongs to the NAPE-PLD family. It depends on Zn(2+) as a cofactor. Expressed in interneurons that are in close proximity to the primary sensory neurons. Predominantly expressed in the pharynx but can also be found in cell bodies of the dorsal and ventral nerve cords.

It catalyses the reaction an N-acyl-1,2-diacyl-sn-glycero-3-phosphoethanolamine + H2O = an N-acylethanolamine + a 1,2-diacyl-sn-glycero-3-phosphate + H(+). The enzyme catalyses 1,2-dihexadecanoyl-sn-glycero-3-phospho-(N-hexadecanoyl)-ethanolamine + H2O = 1,2-dihexadecanoyl-sn-glycero-3-phosphate + N-hexadecanoylethanolamine + H(+). It carries out the reaction N-(5Z,8Z,11Z,14Z-eicosatetraenoyl)-1,2-di-(9Z-octadecenoyl)-sn-glycero-3-phosphoethanolamine + H2O = N-(5Z,8Z,11Z,14Z-eicosatetraenoyl)-ethanolamine + 1,2-di-(9Z-octadecenoyl)-sn-glycero-3-phosphate + H(+). Functionally, D-type phospholipase that hydrolyzes N-acyl-phosphatidylethanolamines (NAPEs) to produce bioactive N-acylethanolamines/fatty acid ethanolamides (NAEs/FAEs) and phosphatidic acid. NAEs are bioactive lipids that are involved in diverse physiological processes such as growth and lifespan. The chain is N-acyl-phosphatidylethanolamine-hydrolyzing phospholipase D 1 from Caenorhabditis elegans.